Reading from the N-terminus, the 175-residue chain is Clathrin-associated protein AP-3 complex component APS3 (175 aa).

This sequence belongs to the adaptor complexes small subunit family. As to quaternary structure, adaptor protein complex 3 (AP-3) is a heterotetramer composed of 2 large adaptins, a medium adaptin and a small adaptin.

Its subcellular location is the golgi apparatus. The protein localises to the cytoplasmic vesicle membrane. Its function is as follows. Part of the AP-3 complex, an adapter-related complex which is not clathrin-associated. The complex is associated with the Golgi region as well as more peripheral structures. It facilitates the budding of vesicles from the Golgi membrane. Involved in vacuolar trafficking and contributes to hyphal growth and pathogenesis. The chain is Clathrin-associated protein AP-3 complex component APS3 (APS3) from Candida albicans (strain SC5314 / ATCC MYA-2876) (Yeast).